The following is a 147-amino-acid chain: Allograft inflammatory factor 1 (147 aa).

Ser-2 carries the post-translational modification N-acetylserine. Residue Lys-11 is modified to N6-acetyllysine. Ser-39 carries the phosphoserine modification. In terms of domain architecture, EF-hand 1 spans 45–80 (SKLEAFKTKYMEFDLNGNGDIDIMSLKRMLEKLGVP). The Ca(2+) site is built by Asp-58, Asn-60, Asn-62, Asp-64, Glu-98, Thr-100, and Asp-105. The 35-residue stretch at 81 to 115 (KTHLELKKLIREVSSGSEETFSYSDFLRMMLGKRS) folds into the EF-hand 2; degenerate domain. The segment at 127–147 (KNKEHQKPTGPPAKKAISELP) is disordered.

As to quaternary structure, homodimer (Potential). Monomer. Interacts with LCP1. In terms of tissue distribution, cardiac allograft, spleen and testis. Expressed by inflammatory cells (macrophages and neutrophils).

The protein resides in the cytoplasm. It localises to the cytoskeleton. It is found in the cell projection. Its subcellular location is the ruffle membrane. The protein localises to the phagocytic cup. Actin-binding protein that enhances membrane ruffling and RAC activation. Enhances the actin-bundling activity of LCP1. Binds calcium. Plays a role in RAC signaling and in phagocytosis. May play an role in macrophage activation and function. Promotes the proliferation of vascular smooth muscle cells and of T-lymphocytes. Enhances lymphocyte migration. Plays a role in vascular inflammation. The chain is Allograft inflammatory factor 1 (Aif1) from Rattus norvegicus (Rat).